Consider the following 123-residue polypeptide: Small ribosomal subunit protein uS13 (123 aa).

A compositionally biased stretch (basic residues) spans 99 to 113; the sequence is RGQRTHTNARTRKGG. Residues 99 to 123 form a disordered region; the sequence is RGQRTHTNARTRKGGSRLAVAAKKK.

It belongs to the universal ribosomal protein uS13 family. Part of the 30S ribosomal subunit. Forms a loose heterodimer with protein S19. Forms two bridges to the 50S subunit in the 70S ribosome.

Its function is as follows. Located at the top of the head of the 30S subunit, it contacts several helices of the 16S rRNA. In the 70S ribosome it contacts the 23S rRNA (bridge B1a) and protein L5 of the 50S subunit (bridge B1b), connecting the 2 subunits; these bridges are implicated in subunit movement. Contacts the tRNAs in the A and P-sites. The protein is Small ribosomal subunit protein uS13 of Anaplasma phagocytophilum (strain HZ).